The sequence spans 200 residues: Late embryogenesis abundant protein 19 (200 aa).

Disordered stretches follow at residues 1 to 158 and 172 to 200; these read MASH…KSTV and TEDK…ARDH. Composition is skewed to basic and acidic residues over residues 13–23, 30–42, 53–81, 88–97, and 105–114; these read GETKAHTEEKA, SKDK…DRAS, QDTK…KDKT, ARDKAAESKD, and EKTEQAKQKA. Residues 52 to 81 adopt a coiled-coil conformation; sequence GQDTKEATKEKAQAAKERASETAQAAKDKT. Over residues 115-130 the composition is skewed to low complexity; that stretch reads AETAGAAKQKTAETAQ. Over residues 145–156 the composition is skewed to polar residues; the sequence is SVLQQASEQVKS. Positions 172–183 are enriched in basic and acidic residues; the sequence is TEDKAGTDDGAN. Over residues 186-200 the composition is skewed to low complexity; sequence TSATAAATETTARDH.

It belongs to the LEA type 4 family. As to expression, expressed in the shoot apex and leaves.

Involved in response to drought stress. The sequence is that of Late embryogenesis abundant protein 19 from Oryza sativa subsp. indica (Rice).